A 78-amino-acid chain; its full sequence is Small ribosomal subunit protein uS17 (78 aa).

The protein belongs to the universal ribosomal protein uS17 family. Part of the 30S ribosomal subunit.

Functionally, one of the primary rRNA binding proteins, it binds specifically to the 5'-end of 16S ribosomal RNA. The protein is Small ribosomal subunit protein uS17 of Rhizobium meliloti (strain 1021) (Ensifer meliloti).